We begin with the raw amino-acid sequence, 158 residues long: Transcription elongation factor GreA (158 aa).

A coiled-coil region spans residues 45–72 (AEYHAAREQQSFIEGRIKQLEGELSHAE).

This sequence belongs to the GreA/GreB family.

Necessary for efficient RNA polymerase transcription elongation past template-encoded arresting sites. The arresting sites in DNA have the property of trapping a certain fraction of elongating RNA polymerases that pass through, resulting in locked ternary complexes. Cleavage of the nascent transcript by cleavage factors such as GreA or GreB allows the resumption of elongation from the new 3'terminus. GreA releases sequences of 2 to 3 nucleotides. The chain is Transcription elongation factor GreA from Xylella fastidiosa (strain M12).